Here is a 534-residue protein sequence, read N- to C-terminus: Serine/threonine-protein phosphatase 2B catalytic subunit (534 aa).

Positions 88, 90, and 116 each coordinate Fe cation. The Zn(2+) site is built by Asp-116 and Asn-148. The active-site Proton donor is the His-149. Zn(2+) is bound by residues His-197 and His-279. 2 disordered regions span residues 375 to 398 and 475 to 534; these read LEDE…DVES and PSHE…TREA. Basic and acidic residues-rich tracts occupy residues 475 to 497 and 524 to 534; these read PSHE…RAQQ and QRDAARETREA.

The protein belongs to the PPP phosphatase family. PP-2B subfamily. Composed of two components (A and B), the A component is the catalytic subunit and the B component confers calcium sensitivity. Requires Fe(3+) as cofactor. It depends on Zn(2+) as a cofactor.

The enzyme catalyses O-phospho-L-seryl-[protein] + H2O = L-seryl-[protein] + phosphate. The catalysed reaction is O-phospho-L-threonyl-[protein] + H2O = L-threonyl-[protein] + phosphate. Functionally, calcium-dependent, calmodulin-stimulated protein phosphatase. This subunit may have a role in the calmodulin activation of calcineurin. The chain is Serine/threonine-protein phosphatase 2B catalytic subunit (cnaA) from Aspergillus fumigatus (strain ATCC MYA-4609 / CBS 101355 / FGSC A1100 / Af293) (Neosartorya fumigata).